Reading from the N-terminus, the 470-residue chain is MEPVYSWGNTHLDFVDPEIYDLIEKEKHRQCRGIELIAAENFTSVAVMEALGSCLTNKYSEGMPGNRYYGGTEFIDEIESLCRSRSLEAFHCNPEKWGVNVQPYSGSPANFAAYTALLQPHDRIMGLDLPSGGHITHGYYSSGGKNISATSIYFENLPYKVDSKTGYIDYDKLEEKAMDFRPKLIICGGTSYPREWDYARFRAVADKVGAFLLCDMAHNSALVAAQEAADPFEYCDVVTTSTHKSLRGPRAGMIFYRKGPKPAKKGQPEGEVYDFDAKINSAVFPALQSGPHNNKIGALAVALKQVMAPSFKVYAKQVKANAACLASYLINKGYTLVTDGTDNHLILWDLRPLGLTGNKVEKVCELCYITLNRNAVFGDTSFLAPGGVRIGTPAMTSRGLVEKDFEKIGEFLHRAVTITLDIQEQYGKVMKDFNKGLVNNKEIDEIKADVEEFTYDFDMPGFFISESRND.

The residue at position 244 (Lys-244) is an N6-(pyridoxal phosphate)lysine.

This sequence belongs to the SHMT family. As to quaternary structure, homotetramer. Requires pyridoxal 5'-phosphate as cofactor.

The protein resides in the cytoplasm. The catalysed reaction is (6R)-5,10-methylene-5,6,7,8-tetrahydrofolate + glycine + H2O = (6S)-5,6,7,8-tetrahydrofolate + L-serine. It participates in one-carbon metabolism; tetrahydrofolate interconversion. Catalyzes the interconversion of serine and glycine. The protein is Serine hydroxymethyltransferase 5 (SHM5) of Arabidopsis thaliana (Mouse-ear cress).